Here is a 125-residue protein sequence, read N- to C-terminus: Small ribosomal subunit protein uS12 (125 aa).

Asp89 bears the 3-methylthioaspartic acid mark. The segment at 105–125 (QGVKDRKQSRSKYGAKKPKAK) is disordered. Residues 113 to 125 (SRSKYGAKKPKAK) are compositionally biased toward basic residues.

The protein belongs to the universal ribosomal protein uS12 family. Part of the 30S ribosomal subunit. Contacts proteins S8 and S17. May interact with IF1 in the 30S initiation complex.

Its function is as follows. With S4 and S5 plays an important role in translational accuracy. Interacts with and stabilizes bases of the 16S rRNA that are involved in tRNA selection in the A site and with the mRNA backbone. Located at the interface of the 30S and 50S subunits, it traverses the body of the 30S subunit contacting proteins on the other side and probably holding the rRNA structure together. The combined cluster of proteins S8, S12 and S17 appears to hold together the shoulder and platform of the 30S subunit. This is Small ribosomal subunit protein uS12 from Delftia acidovorans (strain DSM 14801 / SPH-1).